A 406-amino-acid polypeptide reads, in one-letter code: Cytochrome P450 165C4 (406 aa).

Cys-356 contacts heme.

The protein belongs to the cytochrome P450 family. It depends on heme as a cofactor.

The protein operates within antibiotic biosynthesis; vancomycin biosynthesis. In terms of biological role, involved in the coupling of aromatic side chains of the heptapeptide of vancomycin. This Amycolatopsis orientalis (Nocardia orientalis) protein is Cytochrome P450 165C4 (cyp165C4).